Reading from the N-terminus, the 318-residue chain is MEKMNYLLPEESGEMTLSGITTLRKMEQKLRNLFESQNYQEVMPPNFESVELYTGLDAGFEQEKMFQFINHEGKSIALRYDFTVPLARNFALSELKEARYSYFGKVFRKEKRHKGRRTESYQVGTELLGLSEVTGDQEILGLTFMTLEALTLKNTIVEIGSAAFFKRLCELSGGDAPLFSELLEKKSLSGMKAFVDKHEMRGAPRDLLLALMTTTDLPTMKKLVLATGDEKLSQALEMLEALNLPDKTAICQIHYDFAMVPAMGYYTGLMFQVYVEGVAQAVISGGRYDKLLKQFGKTTGSIGFCVHMENVMKGLNND.

Belongs to the class-II aminoacyl-tRNA synthetase family. HisZ subfamily. In terms of assembly, heteromultimer composed of HisG and HisZ subunits.

Its subcellular location is the cytoplasm. The protein operates within amino-acid biosynthesis; L-histidine biosynthesis; L-histidine from 5-phospho-alpha-D-ribose 1-diphosphate: step 1/9. In terms of biological role, required for the first step of histidine biosynthesis. May allow the feedback regulation of ATP phosphoribosyltransferase activity by histidine. This is ATP phosphoribosyltransferase regulatory subunit from Lactococcus lactis subsp. cremoris (strain SK11).